The sequence spans 444 residues: Type I restriction enzyme EcoDI specificity subunit (444 aa).

This sequence belongs to the type-I restriction system S methylase family. The type I restriction/modification system is composed of three polypeptides R, M and S; the restriction enzyme has stoichiometry R(2)M(2)S(1) while the methyltransferase is M(2)S(1).

Its function is as follows. The specificity (S) subunit of a type I restriction enzyme; this subunit dictates DNA sequence specificity. The M and S subunits together form a methyltransferase (MTase) that methylates two adenine residues of the sequence 5'-TTAN(7)GTCY-3'. In the presence of the R subunit the complex can also act as an endonuclease, binding to the same target sequence but cutting the DNA some distance from this site. Whether the DNA is cut or modified depends on the methylation state of the target sequence. When the target site is unmodified, the DNA is cut. When the target site is hemimethylated, the complex acts as a maintenance MTase modifying the DNA so that both strands become methylated. After locating a non-methylated recognition site, the enzyme complex serves as a molecular motor that translocates DNA in an ATP-dependent manner until a collision occurs that triggers cleavage. This chain is Type I restriction enzyme EcoDI specificity subunit, found in Escherichia coli.